The sequence spans 192 residues: MSIQNEMPGYNDVYQLLNQQGVGLTPAEMHGLISGLLCGGNTDSSWQPLVHDLTNEGLAFGHELAQALRNMHSAISDSLDDDGFLFQLYLPEGDAVSVFDRADALAGWVNHFLLGLGVSQPKLDKVKDETGEAIDDLRNIAQLGYDEDEDQEELEMSLEEIIEYVRVAALLCHDTFARQQPTAPEVRKPTLH.

Belongs to the UPF0149 family.

The protein is UPF0149 protein KPN78578_32810 of Klebsiella pneumoniae subsp. pneumoniae (strain ATCC 700721 / MGH 78578).